The chain runs to 146 residues: Large ribosomal subunit protein uL15 (146 aa).

Positions 1-54 (MKLHELKPAAGSRKAPKRVGRGTGSGLGRNAGKGEKGQNARSGGGVRPGFEGGQ) are disordered. Gly residues-rich tracts occupy residues 21–31 (RGTGSGLGRNA) and 42–52 (SGGGVRPGFEG).

Belongs to the universal ribosomal protein uL15 family. As to quaternary structure, part of the 50S ribosomal subunit.

Binds to the 23S rRNA. In Clostridium acetobutylicum (strain ATCC 824 / DSM 792 / JCM 1419 / IAM 19013 / LMG 5710 / NBRC 13948 / NRRL B-527 / VKM B-1787 / 2291 / W), this protein is Large ribosomal subunit protein uL15.